The following is a 238-amino-acid chain: Cysteine-rich venom protein pseudechetoxin-like (238 aa).

A signal peptide spans 1–19 (MIAFLVLLSLAAVLQQSSG). Residues 20–28 (TVDFASESS) constitute a propeptide that is removed on maturation. One can recognise an SCP domain in the interval 38 to 164 (VDKHNDLRRS…STKYLYVCQY (127 aa)). Disulfide bonds link Cys-75-Cys-153, Cys-92-Cys-165, Cys-148-Cys-162, Cys-184-Cys-191, Cys-187-Cys-196, Cys-200-Cys-233, Cys-209-Cys-227, and Cys-218-Cys-231. One can recognise a ShKT domain in the interval 200 to 233 (CKHNDDLSNCKTLVKKHKCQTEWIKSKCPATCFC).

This sequence belongs to the CRISP family. Expressed by the venom gland.

Its subcellular location is the secreted. Functionally, blocks olfactory (CNGA2) and retinal (CNGA1) CNG channel currents. Does not affect neither depolarization- nor caffeine-induced contraction of smooth muscle. The chain is Cysteine-rich venom protein pseudechetoxin-like from Pseudonaja textilis (Eastern brown snake).